Consider the following 524-residue polypeptide: Cytochrome P450 6k1 (524 aa).

Cys-464 provides a ligand contact to heme.

Belongs to the cytochrome P450 family. Requires heme as cofactor.

Its subcellular location is the endoplasmic reticulum membrane. The protein resides in the microsome membrane. The protein is Cytochrome P450 6k1 (CYP6K1) of Blattella germanica (German cockroach).